The sequence spans 560 residues: Membrane protein insertase YidC (560 aa).

The next 6 helical transmembrane spans lie at 5-25, 334-354, 357-377, 431-451, 476-496, and 522-542; these read IINL…WQYF, AIDF…MNFF, YVGN…LLMF, LPIL…YVTI, LFGL…WPIL, and FMPL…LIYW.

Belongs to the OXA1/ALB3/YidC family. Type 1 subfamily. Interacts with the Sec translocase complex via SecD. Specifically interacts with transmembrane segments of nascent integral membrane proteins during membrane integration.

It localises to the cell inner membrane. Its function is as follows. Required for the insertion and/or proper folding and/or complex formation of integral membrane proteins into the membrane. Involved in integration of membrane proteins that insert both dependently and independently of the Sec translocase complex, as well as at least some lipoproteins. Aids folding of multispanning membrane proteins. The chain is Membrane protein insertase YidC from Rickettsia conorii (strain ATCC VR-613 / Malish 7).